A 240-amino-acid chain; its full sequence is UDP-2,3-diacylglucosamine hydrolase (240 aa).

The Mn(2+) site is built by Asp-8, His-10, Asp-41, Asn-79, and His-114. 79–80 is a binding site for substrate; the sequence is NR. Residues Asp-122, Ser-160, Thr-164, Lys-167, and His-195 each coordinate substrate. Mn(2+)-binding residues include His-195 and His-197.

Belongs to the LpxH family. It depends on Mn(2+) as a cofactor.

Its subcellular location is the cell inner membrane. It catalyses the reaction UDP-2-N,3-O-bis[(3R)-3-hydroxytetradecanoyl]-alpha-D-glucosamine + H2O = 2-N,3-O-bis[(3R)-3-hydroxytetradecanoyl]-alpha-D-glucosaminyl 1-phosphate + UMP + 2 H(+). It participates in glycolipid biosynthesis; lipid IV(A) biosynthesis; lipid IV(A) from (3R)-3-hydroxytetradecanoyl-[acyl-carrier-protein] and UDP-N-acetyl-alpha-D-glucosamine: step 4/6. Functionally, hydrolyzes the pyrophosphate bond of UDP-2,3-diacylglucosamine to yield 2,3-diacylglucosamine 1-phosphate (lipid X) and UMP by catalyzing the attack of water at the alpha-P atom. Involved in the biosynthesis of lipid A, a phosphorylated glycolipid that anchors the lipopolysaccharide to the outer membrane of the cell. This Pseudomonas aeruginosa (strain UCBPP-PA14) protein is UDP-2,3-diacylglucosamine hydrolase.